The chain runs to 188 residues: Single-stranded DNA-binding protein DdrB (188 aa).

Residues 140-188 (YAVPGGAAGNGQGRPAPQGQPAQARPQATAARPAARPPVQPGQEEETPF) form a disordered region. Low complexity predominate over residues 152 to 173 (GRPAPQGQPAQARPQATAARPA).

As to quaternary structure, homopentamer arranged in a ring-structure; DNA binds between subunits and along the top of the ring. The pentamers self-associate to coat ssDNA in higher-ordered structures; oligomerization facilitates the assembly of extended nucleoprotein complexes. Self-assembly does not however require ssDNA-binding. Interacts with SSB.

In terms of biological role, ssDNA-binding protein that contributes to the ionizing radiation resistance of D.radiodurans. Plays a role in DNA repair and genome reconstitution in a RecA-independent process. Required for recovery from severe genomic fragmentation as a result of exposure to severe levels of ionizing radiation. Binds ssDNA but not dsDNA. Stimulates annealing of complementary ssDNA. Does not complement an ssb disruption. The sequence is that of Single-stranded DNA-binding protein DdrB (ddrB) from Deinococcus radiodurans (strain ATCC 13939 / DSM 20539 / JCM 16871 / CCUG 27074 / LMG 4051 / NBRC 15346 / NCIMB 9279 / VKM B-1422 / R1).